Consider the following 78-residue polypeptide: Consomatin Nc1 (78 aa).

The signal sequence occupies residues 1-22 (MQTAYWVMVMVMVWITAPLSEG). Positions 23-59 (GKPNDVIRGLVPDDLTPQLILRSLISRRRSDKDVGKR) are excised as a propeptide. Position 61 is a 4-carboxyglutamate (E61). An intrachain disulfide couples C62 to C67. W64 carries the post-translational modification D-tryptophan. P70 is modified (4-hydroxyproline). Positions 71 to 78 (LSRRHDLG) are excised as a propeptide.

The protein belongs to the conotoxin C superfamily. Consomatin family. Expressed by the venom duct.

It is found in the secreted. Functionally, moderately activates human somatostatin receptors (SSTR) with a preferential activation of SSTR1 and SSTR4. In vivo, does not cause behavioral changes in mice within a few minutes of intracranial injection, but causes a progressive loss of movement thereafter. Four to five hours after injection, mice recover, even with the highest dose tested. Shows antinociception and antihyperalgesia activities in two mouse models of acute pain, most probably by acting outside the central nervous system. This chain is Consomatin Nc1, found in Conus neocostatus (Cone snail).